The chain runs to 283 residues: Diaminopimelate epimerase (283 aa).

Residues Asn13, Gln45, and Asn65 each contribute to the substrate site. Cys74 acts as the Proton donor in catalysis. Residues 75 to 76, Asn156, Asn190, and 208 to 209 contribute to the substrate site; these read GN and ER. Residue Cys217 is the Proton acceptor of the active site. 218–219 provides a ligand contact to substrate; that stretch reads GS.

The protein belongs to the diaminopimelate epimerase family. Homodimer.

It localises to the cytoplasm. The catalysed reaction is (2S,6S)-2,6-diaminopimelate = meso-2,6-diaminopimelate. It functions in the pathway amino-acid biosynthesis; L-lysine biosynthesis via DAP pathway; DL-2,6-diaminopimelate from LL-2,6-diaminopimelate: step 1/1. Its function is as follows. Catalyzes the stereoinversion of LL-2,6-diaminopimelate (L,L-DAP) to meso-diaminopimelate (meso-DAP), a precursor of L-lysine and an essential component of the bacterial peptidoglycan. The protein is Diaminopimelate epimerase of Bartonella tribocorum (strain CIP 105476 / IBS 506).